The primary structure comprises 211 residues: Arginine exporter protein ArgO (211 aa).

6 consecutive transmembrane segments (helical) span residues 1–21 (MFSY…PLGP), 37–57 (IMIA…GIFG), 68–88 (LLAL…FGAF), 111–131 (IIAT…DTFV), 147–167 (WFAL…AILA), and 182–202 (IINL…ARDG).

Belongs to the LysE/ArgO transporter (TC 2.A.75) family.

It is found in the cell inner membrane. The catalysed reaction is L-arginine(in) = L-arginine(out). Its function is as follows. Involved in the export of arginine. Important to control the intracellular level of arginine and the correct balance between arginine and lysine. This Escherichia coli O157:H7 protein is Arginine exporter protein ArgO.